Consider the following 753-residue polypeptide: 5-methyltetrahydropteroyltriglutamate--homocysteine methyltransferase (753 aa).

5-methyltetrahydropteroyltri-L-glutamate-binding positions include 17 to 20 (RELK) and K117. L-homocysteine-binding positions include 431–433 (IGS) and E484. L-methionine-binding positions include 431 to 433 (IGS) and E484. 5-methyltetrahydropteroyltri-L-glutamate contacts are provided by residues 515 to 516 (RC) and W561. D599 contacts L-homocysteine. D599 contributes to the L-methionine binding site. E605 serves as a coordination point for 5-methyltetrahydropteroyltri-L-glutamate. Residues H641, C643, and E665 each contribute to the Zn(2+) site. The active-site Proton donor is H694. Residue C726 coordinates Zn(2+).

Belongs to the vitamin-B12 independent methionine synthase family. In terms of assembly, monomer. Zn(2+) is required as a cofactor.

It catalyses the reaction 5-methyltetrahydropteroyltri-L-glutamate + L-homocysteine = tetrahydropteroyltri-L-glutamate + L-methionine. It participates in amino-acid biosynthesis; L-methionine biosynthesis via de novo pathway; L-methionine from L-homocysteine (MetE route): step 1/1. In terms of biological role, catalyzes the transfer of a methyl group from 5-methyltetrahydrofolate to homocysteine resulting in methionine formation. The polypeptide is 5-methyltetrahydropteroyltriglutamate--homocysteine methyltransferase (Escherichia coli (strain K12)).